The chain runs to 489 residues: Bypass of stop codon protein 5 (489 aa).

The segment at 1 to 42 is disordered; that stretch reads MQESKEPQNKFEGCQRISSSSSTLFGGTSFEEPRCGTSQGKE. Low complexity predominate over residues 18–30; sequence SSSSSTLFGGTSF. A phosphoserine mark is found at S111 and S350.

This sequence belongs to the BUL1 family.

Its function is as follows. Appears to play a role in translation fidelity, and may act when translation is compromised. May be a component of the ubiquitination pathway. The sequence is that of Bypass of stop codon protein 5 (BSC5) from Saccharomyces cerevisiae (strain ATCC 204508 / S288c) (Baker's yeast).